The sequence spans 365 residues: Zinc transporter 7 (365 aa).

An N-terminal signal peptide occupies residues 1 to 26 (MAYSKACYKLTTITILLLSFTLPSLA). The Extracellular portion of the chain corresponds to 27–56 (GNAENADVSECKAESGDLSCHNNKEAQKLK). Residues 57-77 (IIAIPSILVASMIGVSLPLFS) form a helical membrane-spanning segment. The Cytoplasmic segment spans residues 78–90 (RSIPALGPDREMS). Residues 91-111 (VIVKTLASGVILATGFMHVLP) form a helical membrane-spanning segment. Topologically, residues 112–129 (DSFDDLTSKCLPEDPWQK) are extracellular. The helical transmembrane segment at 130–150 (FPFATFITMISALLVLMIESF) threads the bilayer. Residues 151-210 (AMCAYARRTSKREGEVVPLENGSNSVDTQNDIQTLENGSSYVEKQEKVNEDKTSELLRNK) lie on the Cytoplasmic side of the membrane. Residues 211–231 (VIAQILELGIVVHSVVIGLAM) form a helical membrane-spanning segment. The Extracellular segment spans residues 232–242 (GASDNKCTVQS). Residues 243–263 (LIAALCFHQLFEGMGLGGSIL) traverse the membrane as a helical segment. Topologically, residues 264–272 (QAQFKSKTN) are cytoplasmic. The helical transmembrane segment at 273–293 (WTMVFFFSVTTPFGIVLGMAI) threads the bilayer. Residues 294-304 (QKIYDETSPTA) are Extracellular-facing. Residues 305 to 325 (LIVVGVLNACSAGLLIYMALV) form a helical membrane-spanning segment. Residues 326 to 344 (NLLAHEFFGPKIQGNIKLH) are Cytoplasmic-facing. The chain crosses the membrane as a helical span at residues 345-365 (VLGYVATFTGAAGMSLMAKWA).

Belongs to the ZIP transporter (TC 2.A.5) family.

It is found in the cell membrane. Probably mediates zinc uptake from the rhizosphere. In Arabidopsis thaliana (Mouse-ear cress), this protein is Zinc transporter 7 (ZIP7).